We begin with the raw amino-acid sequence, 105 residues long: Met repressor (105 aa).

The protein belongs to the MetJ family. Homodimer.

It is found in the cytoplasm. Its function is as follows. This regulatory protein, when combined with SAM (S-adenosylmethionine) represses the expression of the methionine regulon and of enzymes involved in SAM synthesis. In Vibrio vulnificus (strain CMCP6), this protein is Met repressor.